The chain runs to 228 residues: Orotidine 5'-phosphate decarboxylase (228 aa).

Residues aspartate 11, lysine 33, 60–69 (DLKLHDIPNT), threonine 117, arginine 178, glutamine 186, glycine 206, and arginine 207 each bind substrate. Lysine 62 acts as the Proton donor in catalysis.

It belongs to the OMP decarboxylase family. Type 1 subfamily. As to quaternary structure, homodimer.

It catalyses the reaction orotidine 5'-phosphate + H(+) = UMP + CO2. The protein operates within pyrimidine metabolism; UMP biosynthesis via de novo pathway; UMP from orotate: step 2/2. In terms of biological role, catalyzes the decarboxylation of orotidine 5'-monophosphate (OMP) to uridine 5'-monophosphate (UMP). This Ehrlichia canis (strain Jake) protein is Orotidine 5'-phosphate decarboxylase.